The primary structure comprises 296 residues: ADP-forming sulfoacetate-CoA ligase subunit SqwL (296 aa).

Residues 17–20 (TGSE), K43, and 96–98 (IAD) each bind CoA. H251 functions as the Tele-phosphohistidine intermediate in the catalytic mechanism.

Belongs to the succinate/malate CoA ligase alpha subunit family. Forms a complex with SqwK.

It carries out the reaction sulfoacetate + ATP + CoA = sulfoacetyl-CoA + ADP + phosphate. Part of a variant of the sulfo-TK pathway, a D-sulfoquinovose degradation pathway that produces sulfoacetate. Hydrolyzes sulfoacetyl-coenzyme A (sulfoacetyl-CoA) to produce sulfoacetate and CoA coupled with the phosphorylation of ADP to generate ATP. Cannot use succinate, acetate or 3-hydroxypropionate, and shows only residual activities with malonate and 3-sulfopropanoate. The chain is ADP-forming sulfoacetate-CoA ligase subunit SqwL from Acholeplasma sp.